A 148-amino-acid chain; its full sequence is Large ribosomal subunit protein bL9 (148 aa).

Belongs to the bacterial ribosomal protein bL9 family.

Binds to the 23S rRNA. The polypeptide is Large ribosomal subunit protein bL9 (Macrococcus caseolyticus (strain JCSC5402) (Macrococcoides caseolyticum)).